A 576-amino-acid polypeptide reads, in one-letter code: Polyphenol oxidase 3 (576 aa).

6 residues coordinate Cu cation: His-61, His-85, His-94, His-259, His-263, and His-296. The 2'-(S-cysteinyl)-histidine (Cys-His) cross-link spans 83–85; the sequence is CTH. Substrate is bound at residue His-263. A propeptide spans 393–576 (removed in mature form); it reads FVTTQTENPA…ILDDIIHRVN (184 aa).

It belongs to the tyrosinase family. As to quaternary structure, tetramer composed of two subunits of PPO3 (H subunits) and two subunits of the as yet uncharacterized product of ORF239342 (L subunits). Requires Cu(2+) as cofactor. In terms of processing, the C-ter is probably cleaved after Gly-392 since the mature active protein is smaller than the protein encoded by the gene.

The catalysed reaction is 2 L-dopa + O2 = 2 L-dopaquinone + 2 H2O. It carries out the reaction L-tyrosine + O2 = L-dopaquinone + H2O. Functionally, copper-containing oxidase that catalyzes both the o-hydroxylation of monophenols and the subsequent oxidation of the resulting o-diphenols into reactive o-quinones, which evolve spontaneously to produce intermediates, which associate in dark brown pigments. Involved in the initial step of melanin synthesis. Melanins constitute a mechanism of defense and resistance to stress such as UV radiations, free radicals, gamma rays, dehydratation and extreme temperatures, and contribute to the fungal cell-wall resistance against hydrolytic enzymes in avoiding cellular lysis. Fungal pigments are also involved in the formation and stability of spores. This Agaricus bisporus (White button mushroom) protein is Polyphenol oxidase 3 (PPO3).